Here is a 413-residue protein sequence, read N- to C-terminus: Arginine deiminase (413 aa).

Cysteine 403 (amidino-cysteine intermediate) is an active-site residue.

This sequence belongs to the arginine deiminase family.

It localises to the cytoplasm. The catalysed reaction is L-arginine + H2O = L-citrulline + NH4(+). The protein operates within amino-acid degradation; L-arginine degradation via ADI pathway; carbamoyl phosphate from L-arginine: step 1/2. This is Arginine deiminase from Clostridium perfringens (strain SM101 / Type A).